The primary structure comprises 351 residues: V-type proton ATPase subunit d2 (351 aa).

It belongs to the V-ATPase V0D/AC39 subunit family. As to quaternary structure, V-ATPase is a heteromultimeric enzyme composed of a peripheral catalytic V1 complex (components A to H) attached to an integral membrane V0 proton pore complex (components: a, c, c'', d and e).

It localises to the vacuole membrane. Subunit of the integral membrane V0 complex of vacuolar ATPase. Vacuolar ATPase is responsible for acidifying a variety of intracellular compartments in eukaryotic cells, thus providing most of the energy required for transport processes in the vacuolar system. This is V-type proton ATPase subunit d2 (VHA-d2) from Arabidopsis thaliana (Mouse-ear cress).